The following is a 203-amino-acid chain: ATP-dependent Clp protease proteolytic subunit 2 (203 aa).

Catalysis depends on serine 100, which acts as the Nucleophile. Histidine 125 is an active-site residue.

Belongs to the peptidase S14 family. Fourteen ClpP subunits assemble into 2 heptameric rings which stack back to back to give a disk-like structure with a central cavity, resembling the structure of eukaryotic proteasomes.

The protein resides in the cytoplasm. It carries out the reaction Hydrolysis of proteins to small peptides in the presence of ATP and magnesium. alpha-casein is the usual test substrate. In the absence of ATP, only oligopeptides shorter than five residues are hydrolyzed (such as succinyl-Leu-Tyr-|-NHMec, and Leu-Tyr-Leu-|-Tyr-Trp, in which cleavage of the -Tyr-|-Leu- and -Tyr-|-Trp bonds also occurs).. Functionally, cleaves peptides in various proteins in a process that requires ATP hydrolysis. Has a chymotrypsin-like activity. Plays a major role in the degradation of misfolded proteins. The polypeptide is ATP-dependent Clp protease proteolytic subunit 2 (Thermobifida fusca (strain YX)).